The following is a 228-amino-acid chain: DNA mismatch repair protein MutH (228 aa).

It belongs to the MutH family.

The protein resides in the cytoplasm. Functionally, sequence-specific endonuclease that cleaves unmethylated GATC sequences. It is involved in DNA mismatch repair. The protein is DNA mismatch repair protein MutH of Serratia proteamaculans (strain 568).